Here is a 254-residue protein sequence, read N- to C-terminus: 5-keto-D-gluconate 5-reductase (254 aa).

13–37 (LITGSAQGIGFLLATGLGKYGAQII) contributes to the NADP(+) binding site. Serine 145 contributes to the substrate binding site. Tyrosine 158 serves as the catalytic Proton acceptor.

The protein belongs to the short-chain dehydrogenases/reductases (SDR) family.

The catalysed reaction is D-gluconate + NAD(+) = 5-dehydro-D-gluconate + NADH + H(+). It catalyses the reaction D-gluconate + NADP(+) = 5-dehydro-D-gluconate + NADPH + H(+). It functions in the pathway carbohydrate acid metabolism; L-idonate degradation. Its function is as follows. Catalyzes the reduction of 5-keto-D-gluconate to D-gluconate, using either NADH or NADPH. Is likely involved in an L-idonate degradation pathway that allows E.coli to utilize L-idonate as the sole carbon and energy source. Is also able to catalyze the reverse reaction in vitro, but the D-gluconate oxidation by the enzyme can only proceed with NAD. In Escherichia coli O6:H1 (strain CFT073 / ATCC 700928 / UPEC), this protein is 5-keto-D-gluconate 5-reductase.